A 313-amino-acid polypeptide reads, in one-letter code: Ribosomal RNA small subunit methyltransferase H (313 aa).

Residues 35–37 (GGH), Asp-55, Phe-81, Asp-103, and Gln-110 contribute to the S-adenosyl-L-methionine site.

It belongs to the methyltransferase superfamily. RsmH family.

The protein resides in the cytoplasm. The enzyme catalyses cytidine(1402) in 16S rRNA + S-adenosyl-L-methionine = N(4)-methylcytidine(1402) in 16S rRNA + S-adenosyl-L-homocysteine + H(+). Functionally, specifically methylates the N4 position of cytidine in position 1402 (C1402) of 16S rRNA. This Azotobacter vinelandii (strain DJ / ATCC BAA-1303) protein is Ribosomal RNA small subunit methyltransferase H.